A 96-amino-acid chain; its full sequence is Large ribosomal subunit protein uL23 (96 aa).

This sequence belongs to the universal ribosomal protein uL23 family. In terms of assembly, part of the 50S ribosomal subunit. Contacts protein L29, and trigger factor when it is bound to the ribosome.

One of the early assembly proteins it binds 23S rRNA. One of the proteins that surrounds the polypeptide exit tunnel on the outside of the ribosome. Forms the main docking site for trigger factor binding to the ribosome. The chain is Large ribosomal subunit protein uL23 from Caldicellulosiruptor bescii (strain ATCC BAA-1888 / DSM 6725 / KCTC 15123 / Z-1320) (Anaerocellum thermophilum).